Here is a 78-residue protein sequence, read N- to C-terminus: Acyl carrier protein (78 aa).

A Carrier domain is found at 2 to 77 (DELFLRMRAL…DAYEFIKSKV (76 aa)). The residue at position 37 (Ser-37) is an O-(pantetheine 4'-phosphoryl)serine.

The protein belongs to the acyl carrier protein (ACP) family. Post-translationally, 4'-phosphopantetheine is transferred from CoA to a specific serine of apo-ACP by AcpS. This modification is essential for activity because fatty acids are bound in thioester linkage to the sulfhydryl of the prosthetic group.

The protein localises to the cytoplasm. Its pathway is lipid metabolism; fatty acid biosynthesis. Its function is as follows. Carrier of the growing fatty acid chain in fatty acid biosynthesis. This chain is Acyl carrier protein, found in Treponema pallidum (strain Nichols).